A 240-amino-acid chain; its full sequence is Keratinocyte-associated protein 3 (240 aa).

The next 4 membrane-spanning stretches (helical) occupy residues 21 to 41 (VGLALILVGHVNLLVGAVLHG), 63 to 83 (VISVGSGLLSVSVGLVALLAS), 95 to 115 (LLTLALVNLLLSAACSMGLLL), and 163 to 183 (ALALWIPSLFMSAAEAALSGY).

It belongs to the TMEM54 family.

Its subcellular location is the membrane. This Mus musculus (Mouse) protein is Keratinocyte-associated protein 3 (Krtcap3).